A 49-amino-acid chain; its full sequence is uncharacterized protein (49 aa).

This is an uncharacterized protein from Saccharomyces cerevisiae (strain ATCC 204508 / S288c) (Baker's yeast).